The chain runs to 417 residues: Serine hydroxymethyltransferase (417 aa).

(6S)-5,6,7,8-tetrahydrofolate contacts are provided by residues Leu117 and 121–123 (GHL). The residue at position 226 (Lys226) is an N6-(pyridoxal phosphate)lysine.

Belongs to the SHMT family. As to quaternary structure, homodimer. It depends on pyridoxal 5'-phosphate as a cofactor.

The protein resides in the cytoplasm. The catalysed reaction is (6R)-5,10-methylene-5,6,7,8-tetrahydrofolate + glycine + H2O = (6S)-5,6,7,8-tetrahydrofolate + L-serine. The protein operates within one-carbon metabolism; tetrahydrofolate interconversion. It functions in the pathway amino-acid biosynthesis; glycine biosynthesis; glycine from L-serine: step 1/1. In terms of biological role, catalyzes the reversible interconversion of serine and glycine with tetrahydrofolate (THF) serving as the one-carbon carrier. This reaction serves as the major source of one-carbon groups required for the biosynthesis of purines, thymidylate, methionine, and other important biomolecules. Also exhibits THF-independent aldolase activity toward beta-hydroxyamino acids, producing glycine and aldehydes, via a retro-aldol mechanism. The protein is Serine hydroxymethyltransferase of Shouchella clausii (strain KSM-K16) (Alkalihalobacillus clausii).